The following is a 699-amino-acid chain: Elongation factor G (699 aa).

The 276-residue stretch at 8–283 (EHIRNIGICA…AVVDFLPSPI (276 aa)) folds into the tr-type G domain. Residues 17 to 24 (AHIDAGKT), 81 to 85 (DTPGH), and 135 to 138 (NKMD) each bind GTP.

This sequence belongs to the TRAFAC class translation factor GTPase superfamily. Classic translation factor GTPase family. EF-G/EF-2 subfamily.

The protein resides in the cytoplasm. Catalyzes the GTP-dependent ribosomal translocation step during translation elongation. During this step, the ribosome changes from the pre-translocational (PRE) to the post-translocational (POST) state as the newly formed A-site-bound peptidyl-tRNA and P-site-bound deacylated tRNA move to the P and E sites, respectively. Catalyzes the coordinated movement of the two tRNA molecules, the mRNA and conformational changes in the ribosome. The chain is Elongation factor G from Rickettsia parkeri.